The sequence spans 419 residues: uncharacterized protein (419 aa).

This is an uncharacterized protein from Caenorhabditis elegans.